Reading from the N-terminus, the 228-residue chain is 2,3-bisphosphoglycerate-dependent phosphoglycerate mutase (228 aa).

Substrate contacts are provided by residues 8–15 (RHGQSQWN), 21–22 (TG), Arg60, 87–90 (ERHY), Lys98, 114–115 (RR), and 180–181 (GN). The active-site Tele-phosphohistidine intermediate is the His9. The active-site Proton donor/acceptor is the Glu87.

This sequence belongs to the phosphoglycerate mutase family. BPG-dependent PGAM subfamily. As to quaternary structure, homodimer.

The catalysed reaction is (2R)-2-phosphoglycerate = (2R)-3-phosphoglycerate. Its pathway is carbohydrate degradation; glycolysis; pyruvate from D-glyceraldehyde 3-phosphate: step 3/5. Catalyzes the interconversion of 2-phosphoglycerate and 3-phosphoglycerate. The polypeptide is 2,3-bisphosphoglycerate-dependent phosphoglycerate mutase (Novosphingobium aromaticivorans (strain ATCC 700278 / DSM 12444 / CCUG 56034 / CIP 105152 / NBRC 16084 / F199)).